The chain runs to 464 residues: Putative major capsid protein (464 aa).

Positions 1–20 (MTEKKNTERQLTSVQEEVIK) are excised as a propeptide. A helical membrane pass occupies residues 423–445 (LAQVNASVTFAVLWYGALALRAP).

Its subcellular location is the virion. The protein resides in the host membrane. This is Putative major capsid protein from Enterococcus faecalis (Streptococcus faecalis).